The chain runs to 261 residues: U1 small nuclear ribonucleoprotein 70 kDa homolog (261 aa).

The region spanning 100 to 178 (KTMFLSRLSY…RRIVVDVERG (79 aa)) is the RRM domain. A disordered region spans residues 192 to 261 (GLGGRHYTKE…DSSPKRRRYN (70 aa)). Over residues 198–215 (YTKERPRRERGSRFRGDS) the composition is skewed to basic and acidic residues. Over residues 216–235 (GFRGGYRGGFRKSSGGGSRF) the composition is skewed to gly residues.

In terms of assembly, component of the spliceosome, where it is associated with snRNP U1. Associates with U1 snRNA.

The protein resides in the nucleus. Involved in nuclear mRNA splicing. Essential for growth. The sequence is that of U1 small nuclear ribonucleoprotein 70 kDa homolog from Schizosaccharomyces pombe (strain 972 / ATCC 24843) (Fission yeast).